We begin with the raw amino-acid sequence, 606 residues long: Ribonucleoprotein PTB-binding 1 (606 aa).

The segment at 1-41 (MAADVSVTHRPPLSPKSGAEVEAGDAAERRAPEEELPPLDP) is disordered. The residue at position 2 (alanine 2) is an N-acetylalanine. 2 positions are modified to phosphoserine: serine 6 and serine 14. The short motif at 45 to 60 (RKRLEHTERQFRNRRK) is the Nuclear localization signal element. RRM domains are found at residues 59–130 (RKIL…LQPT), 132–210 (ALLC…WTDA), and 221–299 (RCLC…FCAP). An interaction with PTBP1 region spans residues 307–395 (LAALIAAQAT…QTQGQKKPGI (89 aa)). The segment at 391-474 (KKPGILGDSP…PPAPVGLRGS (84 aa)) is disordered. The span at 453–462 (LGLGPPAAQL) shows a compositional bias: low complexity. Threonine 463 is modified (phosphothreonine). Residue serine 474 is modified to Phosphoserine. Proline 488 carries the post-translational modification Phosphothreonine. The disordered stretch occupies residues 519–564 (GLLGLSPGPNGHSHLLKVRAGGGDMQGWEAPAPQRPLTRPALPSVS). A phosphoserine mark is found at serine 562 and histidine 567. The interval 579–606 (CPRPSPAQKAAMWASTPRASAATTRTPT) is disordered. Residues 592-606 (ASTPRASAATTRTPT) are compositionally biased toward low complexity.

As to quaternary structure, interacts with PTBP1, RAVER2, VCL and ACTN1. Part of a complex containing RAVER1, VCL and ACTN1.

It localises to the nucleus. Its subcellular location is the cytoplasm. Cooperates with PTBP1 to modulate regulated alternative splicing events. Promotes exon skipping. Cooperates with PTBP1 to modulate switching between mutually exclusive exons during maturation of the TPM1 pre-mRNA. The polypeptide is Ribonucleoprotein PTB-binding 1 (RAVER1) (Homo sapiens (Human)).